Reading from the N-terminus, the 524-residue chain is Mediator of RNA polymerase II transcription subunit 8 (524 aa).

Residue M1 is modified to N-acetylmethionine. A coiled-coil region spans residues 137–162 (MQIERLKARMDMIAAACENAERVLAD). Disordered stretches follow at residues 291–315 (VPSP…LMQL) and 474–524 (MMQT…QNPQ). 2 stretches are compositionally biased toward low complexity: residues 295 to 315 (QHQI…LMQL) and 474 to 505 (MMQT…TNQQ). The segment covering 506 to 524 (SLQPNNMMQNAQQRHQNPQ) has biased composition (polar residues).

Belongs to the Mediator complex subunit 8 family. Component of the Mediator complex.

The protein resides in the nucleus. Component of the Mediator complex, a coactivator involved in the regulated transcription of nearly all RNA polymerase II-dependent genes. Mediator functions as a bridge to convey information from gene-specific regulatory proteins to the basal RNA polymerase II transcription machinery. The Mediator complex, having a compact conformation in its free form, is recruited to promoters by direct interactions with regulatory proteins and serves for the assembly of a functional preinitiation complex with RNA polymerase II and the general transcription factors. Regulator of both plant defense and flowering time. Involved in pollen tube growth. The chain is Mediator of RNA polymerase II transcription subunit 8 (MED8) from Arabidopsis thaliana (Mouse-ear cress).